The following is a 290-amino-acid chain: ATP synthase gamma chain (290 aa).

This sequence belongs to the ATPase gamma chain family. In terms of assembly, F-type ATPases have 2 components, CF(1) - the catalytic core - and CF(0) - the membrane proton channel. CF(1) has five subunits: alpha(3), beta(3), gamma(1), delta(1), epsilon(1). CF(0) has three main subunits: a, b and c.

It is found in the cell inner membrane. In terms of biological role, produces ATP from ADP in the presence of a proton gradient across the membrane. The gamma chain is believed to be important in regulating ATPase activity and the flow of protons through the CF(0) complex. The sequence is that of ATP synthase gamma chain from Desulfotalea psychrophila (strain LSv54 / DSM 12343).